We begin with the raw amino-acid sequence, 477 residues long: Glycogen synthase (477 aa).

Position 15 (Lys-15) interacts with ADP-alpha-D-glucose.

Belongs to the glycosyltransferase 1 family. Bacterial/plant glycogen synthase subfamily.

It catalyses the reaction [(1-&gt;4)-alpha-D-glucosyl](n) + ADP-alpha-D-glucose = [(1-&gt;4)-alpha-D-glucosyl](n+1) + ADP + H(+). Its pathway is glycan biosynthesis; glycogen biosynthesis. Its function is as follows. Synthesizes alpha-1,4-glucan chains using ADP-glucose. This Citrobacter koseri (strain ATCC BAA-895 / CDC 4225-83 / SGSC4696) protein is Glycogen synthase.